The sequence spans 122 residues: Large ribosomal subunit protein uL14 (122 aa).

Belongs to the universal ribosomal protein uL14 family. Part of the 50S ribosomal subunit. Forms a cluster with proteins L3 and L19. In the 70S ribosome, L14 and L19 interact and together make contacts with the 16S rRNA in bridges B5 and B8.

Its function is as follows. Binds to 23S rRNA. Forms part of two intersubunit bridges in the 70S ribosome. The sequence is that of Large ribosomal subunit protein uL14 from Acetivibrio thermocellus (strain ATCC 27405 / DSM 1237 / JCM 9322 / NBRC 103400 / NCIMB 10682 / NRRL B-4536 / VPI 7372) (Clostridium thermocellum).